The chain runs to 497 residues: Protein DML1 (497 aa).

This sequence belongs to the misato family.

The protein resides in the mitochondrion. Functionally, involved in the partitioning of the mitochondrial organelle and mitochondrial DNA (mtDNA) inheritance. This chain is Protein DML1 (DML1), found in Gibberella zeae (strain ATCC MYA-4620 / CBS 123657 / FGSC 9075 / NRRL 31084 / PH-1) (Wheat head blight fungus).